Reading from the N-terminus, the 117-residue chain is uncharacterized protein (117 aa).

A run of 2 helical transmembrane segments spans residues 43-63 and 73-93; these read APIM…LMLL and AVQH…VFIV.

The protein localises to the cell membrane. This is an uncharacterized protein from Bacillus subtilis (strain 168).